A 301-amino-acid chain; its full sequence is D-alanine--D-alanine ligase (301 aa).

Residues lysine 99–aspartate 294 form the ATP-grasp domain. Position 126–181 (isoleucine 126–threonine 181) interacts with ATP. 3 residues coordinate Mg(2+): aspartate 248, glutamate 261, and asparagine 263.

This sequence belongs to the D-alanine--D-alanine ligase family. Requires Mg(2+) as cofactor. It depends on Mn(2+) as a cofactor.

The protein resides in the cytoplasm. It carries out the reaction 2 D-alanine + ATP = D-alanyl-D-alanine + ADP + phosphate + H(+). It participates in cell wall biogenesis; peptidoglycan biosynthesis. Cell wall formation. This Clostridium botulinum (strain Alaska E43 / Type E3) protein is D-alanine--D-alanine ligase.